Here is a 191-residue protein sequence, read N- to C-terminus: Cytochrome c oxidase assembly protein CtaG (191 aa).

Topologically, residues 1–9 (MALNGPQKT) are cytoplasmic. Residues 10–30 (VVQLVSVVVVMGGLAWASVPF) traverse the membrane as a helical; Signal-anchor for type II membrane protein segment. Topologically, residues 31–191 (YDWFCRVTGF…LDAGEKTNTN (161 aa)) are periplasmic.

The protein belongs to the COX11/CtaG family.

The protein resides in the cell inner membrane. In terms of biological role, exerts its effect at some terminal stage of cytochrome c oxidase synthesis, probably by being involved in the insertion of the copper B into subunit I. This Ruegeria pomeroyi (strain ATCC 700808 / DSM 15171 / DSS-3) (Silicibacter pomeroyi) protein is Cytochrome c oxidase assembly protein CtaG.